Reading from the N-terminus, the 1292-residue chain is (E3-independent) E2 ubiquitin-conjugating enzyme (1292 aa).

The span at 1 to 37 shows a compositional bias: pro residues; the sequence is MADPAAPTPAAPAPAQAPAPAPEAVPAPAAAPVPAPA. 2 disordered regions span residues 1–56 and 85–114; these read MADP…EAGS and EDSD…EGRA. The span at 38–56 shows a compositional bias: low complexity; sequence PASDSASGPSSDSGPEAGS. Phosphoserine occurs at positions 50, 87, 89, 399, and 401. Disordered stretches follow at residues 401–459, 472–519, and 714–746; these read SPDT…AGEQ, RLHS…IPLS, and IEES…TDNG. The span at 406-427 shows a compositional bias: basic and acidic residues; that stretch reads CSRDHSMEDPDKKGESKTKSEA. S441 bears the Phosphoserine mark. Over residues 478–490 the composition is skewed to acidic residues; the sequence is QDADDEAADDTDD. 2 positions are modified to phosphothreonine: T488 and T491. Positions 491–510 are enriched in low complexity; the sequence is TSSVTSSASSTTSSQSGSGT. Positions 512-536 match the Nuclear localization signal motif; sequence RKKSIPLSIKNLKRKHKRKKNKITR. S515 bears the Phosphoserine mark. A compositionally biased stretch (acidic residues) spans 732–742; that stretch reads DEWEDDSDSWE. Residues 812 to 882 adopt a coiled-coil conformation; sequence RELKEAIKIL…IVEEEKMEAV (71 aa). S836 is modified (phosphoserine). At T838 the chain carries Phosphothreonine. S839 is subject to Phosphoserine. Positions 882–893 are enriched in basic and acidic residues; it reads VPDVERKEDKPE. A disordered region spans residues 882 to 903; sequence VPDVERKEDKPEGQSPVKAEWP. S896 bears the Phosphoserine mark. In terms of domain architecture, UBC core spans 953–1113; it reads KFFSTVRKEM…ALIRVVQSMT (161 aa). Residue C1040 is the Glycyl thioester intermediate of the active site. Residues 1160–1248 form a disordered region; the sequence is NGVPKASSSP…KSYRSFLPEK (89 aa).

It belongs to the ubiquitin-conjugating enzyme family. Interacts with CPNE1 (via VWFA domain) and CPNE4 (via VWFA domain). Interacts with UBR2. Phosphorylated. Phosphorylation affects subcellular location. Post-translationally, ubiquitinated: autoubiquitinates, possibly affecting its subcellular location. Predominantly expressed in skeletal muscle and heart.

It localises to the cytoplasm. The protein resides in the nucleus. It carries out the reaction S-ubiquitinyl-[E1 ubiquitin-activating enzyme]-L-cysteine + [acceptor protein]-L-lysine = [E1 ubiquitin-activating enzyme]-L-cysteine + N(6)-monoubiquitinyl-[acceptor protein]-L-lysine.. It participates in protein modification; protein ubiquitination. Inhibited by phenylarsine oxide (PAO). In terms of biological role, E2/E3 hybrid ubiquitin-protein ligase that displays both E2 and E3 ligase activities and mediates monoubiquitination of target proteins. Negatively regulates TRAF6-mediated NF-kappa-B activation independently of its E2 activity. Acts as a positive regulator of BMP7 signaling by mediating monoubiquitination of SMAD6, thereby regulating adipogenesis. Mediates monoubiquitination at different sites of the nuclear localization signal (NLS) of BAP1, leading to cytoplasmic retention of BAP1. Also able to monoubiquitinate the NLS of other chromatin-associated proteins, such as INO80 and CXXC1, affecting their subcellular location. Acts as a regulator of retrograde transport by assisting the TRIM27:MAGEL2 E3 ubiquitin ligase complex to mediate 'Lys-63'-linked ubiquitination of WASHC1, leading to promote endosomal F-actin assembly. This Homo sapiens (Human) protein is (E3-independent) E2 ubiquitin-conjugating enzyme (UBE2O).